We begin with the raw amino-acid sequence, 269 residues long: MPELPEVETSRRGIEPYLVGQTILYAVVRNARLRWPVSDEILALSDQPVLSVQRRAKYLLIELKTGWIIVHLGMSGSLRILPEETEAEKHDHVDLVISNGKILRYTDPRRFGAWLWAKDLETSNVLAHLGPEPLSDEFTAEYLFEKSRNKRTVVKQWLMDNKVVVGVGNIYASESLFTAGILPERAAGSLTETEITQLVATIKAVLLHSIEQGGTTLRDFLQSDGKPGYFAQELQVYGRAGELCRRCGNVIEIAKHGQRSTFFCRHCQH.

The active-site Schiff-base intermediate with DNA is the proline 2. Residue glutamate 3 is the Proton donor of the active site. Lysine 57 acts as the Proton donor; for beta-elimination activity in catalysis. Residues histidine 90, arginine 109, and lysine 150 each coordinate DNA. The FPG-type zinc finger occupies 235-269 (QVYGRAGELCRRCGNVIEIAKHGQRSTFFCRHCQH). The active-site Proton donor; for delta-elimination activity is arginine 259.

This sequence belongs to the FPG family. As to quaternary structure, monomer. Zn(2+) serves as cofactor.

It carries out the reaction Hydrolysis of DNA containing ring-opened 7-methylguanine residues, releasing 2,6-diamino-4-hydroxy-5-(N-methyl)formamidopyrimidine.. It catalyses the reaction 2'-deoxyribonucleotide-(2'-deoxyribose 5'-phosphate)-2'-deoxyribonucleotide-DNA = a 3'-end 2'-deoxyribonucleotide-(2,3-dehydro-2,3-deoxyribose 5'-phosphate)-DNA + a 5'-end 5'-phospho-2'-deoxyribonucleoside-DNA + H(+). Involved in base excision repair of DNA damaged by oxidation or by mutagenic agents. Acts as a DNA glycosylase that recognizes and removes damaged bases. Has a preference for oxidized purines, such as 7,8-dihydro-8-oxoguanine (8-oxoG). Has AP (apurinic/apyrimidinic) lyase activity and introduces nicks in the DNA strand. Cleaves the DNA backbone by beta-delta elimination to generate a single-strand break at the site of the removed base with both 3'- and 5'-phosphates. In Yersinia enterocolitica serotype O:8 / biotype 1B (strain NCTC 13174 / 8081), this protein is Formamidopyrimidine-DNA glycosylase.